The following is a 206-amino-acid chain: Ribosomal RNA large subunit methyltransferase E (206 aa).

S-adenosyl-L-methionine is bound by residues Gly-60, Trp-62, Asp-80, Asp-96, and Asp-121. The active-site Proton acceptor is Lys-161.

Belongs to the class I-like SAM-binding methyltransferase superfamily. RNA methyltransferase RlmE family.

It localises to the cytoplasm. It carries out the reaction uridine(2552) in 23S rRNA + S-adenosyl-L-methionine = 2'-O-methyluridine(2552) in 23S rRNA + S-adenosyl-L-homocysteine + H(+). Specifically methylates the uridine in position 2552 of 23S rRNA at the 2'-O position of the ribose in the fully assembled 50S ribosomal subunit. The sequence is that of Ribosomal RNA large subunit methyltransferase E from Legionella pneumophila (strain Lens).